The following is a 424-amino-acid chain: Phosphomethylpyrimidine synthase (424 aa).

Residues methionine 94, tyrosine 123, histidine 162, 184 to 186, 225 to 228, and glutamate 264 each bind substrate; these read SRG and NGMR. Histidine 268 provides a ligand contact to Zn(2+). Residue tyrosine 291 coordinates substrate. Histidine 332 lines the Zn(2+) pocket. [4Fe-4S] cluster contacts are provided by cysteine 406, cysteine 409, and cysteine 413.

This sequence belongs to the ThiC family. The cofactor is [4Fe-4S] cluster.

It catalyses the reaction 5-amino-1-(5-phospho-beta-D-ribosyl)imidazole + S-adenosyl-L-methionine = 4-amino-2-methyl-5-(phosphooxymethyl)pyrimidine + CO + 5'-deoxyadenosine + formate + L-methionine + 3 H(+). Its pathway is cofactor biosynthesis; thiamine diphosphate biosynthesis. In terms of biological role, catalyzes the synthesis of the hydroxymethylpyrimidine phosphate (HMP-P) moiety of thiamine from aminoimidazole ribotide (AIR) in a radical S-adenosyl-L-methionine (SAM)-dependent reaction. The polypeptide is Phosphomethylpyrimidine synthase (Methanoculleus marisnigri (strain ATCC 35101 / DSM 1498 / JR1)).